Reading from the N-terminus, the 77-residue chain is UPF0248 protein Pcal_0252 (77 aa).

It belongs to the UPF0248 family.

The protein is UPF0248 protein Pcal_0252 of Pyrobaculum calidifontis (strain DSM 21063 / JCM 11548 / VA1).